A 265-amino-acid polypeptide reads, in one-letter code: Cytochrome c oxidase subunit 3 (265 aa).

6 helical membrane passes run 16–36 (PWPI…VMYM), 41–61 (GGAT…FVWW), 81–101 (GPRY…FALF), 162–182 (AVYA…FQGM), 200–220 (FFLA…FSIV), and 245–265 (WHFV…WGGI).

The protein belongs to the cytochrome c oxidase subunit 3 family. Component of the cytochrome c oxidase (complex IV, CIV), a multisubunit enzyme composed of a catalytic core of 3 subunits and several supernumerary subunits. The complex exists as a monomer or a dimer and forms supercomplexes (SCs) in the inner mitochondrial membrane with ubiquinol-cytochrome c oxidoreductase (cytochrome b-c1 complex, complex III, CIII).

It is found in the mitochondrion inner membrane. It carries out the reaction 4 Fe(II)-[cytochrome c] + O2 + 8 H(+)(in) = 4 Fe(III)-[cytochrome c] + 2 H2O + 4 H(+)(out). Its function is as follows. Component of the cytochrome c oxidase, the last enzyme in the mitochondrial electron transport chain which drives oxidative phosphorylation. The respiratory chain contains 3 multisubunit complexes succinate dehydrogenase (complex II, CII), ubiquinol-cytochrome c oxidoreductase (cytochrome b-c1 complex, complex III, CIII) and cytochrome c oxidase (complex IV, CIV), that cooperate to transfer electrons derived from NADH and succinate to molecular oxygen, creating an electrochemical gradient over the inner membrane that drives transmembrane transport and the ATP synthase. Cytochrome c oxidase is the component of the respiratory chain that catalyzes the reduction of oxygen to water. Electrons originating from reduced cytochrome c in the intermembrane space (IMS) are transferred via the dinuclear copper A center (CU(A)) of subunit 2 and heme A of subunit 1 to the active site in subunit 1, a binuclear center (BNC) formed by heme A3 and copper B (CU(B)). The BNC reduces molecular oxygen to 2 water molecules using 4 electrons from cytochrome c in the IMS and 4 protons from the mitochondrial matrix. The chain is Cytochrome c oxidase subunit 3 (COX3) from Helianthus annuus (Common sunflower).